The sequence spans 403 residues: S-adenosylmethionine synthase (403 aa).

His-17 serves as a coordination point for ATP. Residue Asp-19 coordinates Mg(2+). Residue Glu-45 participates in K(+) binding. L-methionine contacts are provided by Glu-58 and Gln-104. A flexible loop region spans residues 104 to 114 (QSPDIAQGVDT). ATP is bound by residues 179–181 (DGK), 250–251 (KF), Asp-259, 265–266 (RK), Ala-282, and Lys-286. An L-methionine-binding site is contributed by Asp-259. Lys-290 is a binding site for L-methionine.

This sequence belongs to the AdoMet synthase family. In terms of assembly, homotetramer; dimer of dimers. The cofactor is Mg(2+). K(+) serves as cofactor.

The protein localises to the cytoplasm. The enzyme catalyses L-methionine + ATP + H2O = S-adenosyl-L-methionine + phosphate + diphosphate. It participates in amino-acid biosynthesis; S-adenosyl-L-methionine biosynthesis; S-adenosyl-L-methionine from L-methionine: step 1/1. Its function is as follows. Catalyzes the formation of S-adenosylmethionine (AdoMet) from methionine and ATP. The overall synthetic reaction is composed of two sequential steps, AdoMet formation and the subsequent tripolyphosphate hydrolysis which occurs prior to release of AdoMet from the enzyme. The polypeptide is S-adenosylmethionine synthase (Mycobacterium marinum (strain ATCC BAA-535 / M)).